Consider the following 103-residue polypeptide: Histone H4 (103 aa).

A compositionally biased stretch (gly residues) spans 1 to 14 (MSGRGKGGKGLGKG). The tract at residues 1-20 (MSGRGKGGKGLGKGGAKRHR) is disordered. The residue at position 6 (lysine 6) is an N6-acetyl-N6-methyllysine; alternate. Lysine 6, lysine 9, and lysine 13 each carry N6-acetyllysine; alternate. 3 positions are modified to N6-methyllysine; alternate: lysine 6, lysine 9, and lysine 13. An N6-butyryllysine; alternate mark is found at lysine 9 and lysine 13. Lysine 13 is subject to N6-acetyl-N6-methyllysine; alternate. Lysine 17 carries the post-translational modification N6-acetyllysine. The DNA-binding element occupies 17–21 (KRHRK). An N6-succinyllysine modification is found at lysine 32. Arginine 56 is subject to Omega-N-methylarginine. A phosphoserine mark is found at serine 61 and serine 65. Position 78 is an N6-succinyllysine (lysine 78). Lysine 80 carries the post-translational modification N6-acetyllysine. Lysine 92 carries the N6-glutaryllysine modification.

The protein belongs to the histone H4 family. In terms of assembly, the nucleosome is a histone octamer containing two molecules each of H2A, H2B, H3 and H4 assembled in one H3-H4 heterotetramer and two H2A-H2B heterodimers. The octamer wraps approximately 147 bp of DNA. Histone H4 is a component of the UAF (upstream activation factor) complex which consists of UAF30, RRN5, RRN9, RRN10, and histones H3 and H4. Glutarylation at Lys-92 (H4K91glu) destabilizes nucleosomes by promoting dissociation of the H2A-H2B dimers from nucleosomes.

Its subcellular location is the nucleus. It localises to the chromosome. In terms of biological role, core component of nucleosome. Nucleosomes wrap and compact DNA into chromatin, limiting DNA accessibility to the cellular machineries which require DNA as a template. Histones thereby play a central role in transcription regulation, DNA repair, DNA replication and chromosomal stability. DNA accessibility is regulated via a complex set of post-translational modifications of histones, also called histone code, and nucleosome remodeling. Component of the UAF (upstream activation factor) complex which interacts with the upstream element of the RNA polymerase I promoter and forms a stable preinitiation complex. Together with SPT15/TBP UAF seems to stimulate basal transcription to a fully activated level. The chain is Histone H4 (HHF1) from Saccharomyces cerevisiae (strain ATCC 204508 / S288c) (Baker's yeast).